The primary structure comprises 71 residues: Arrestin-D (71 aa).

This sequence belongs to the arrestin family. Adrenal, cerebral cortex, heart, liver, lung, pituitary and testis.

The chain is Arrestin-D (Dar) from Rattus norvegicus (Rat).